We begin with the raw amino-acid sequence, 928 residues long: Probable outer membrane protein pmp10 (928 aa).

The signal sequence occupies residues 1–25; the sequence is MKSQFSWLVLSSTLACFTSCSTVFA. Positions 635–928 constitute an Autotransporter domain; it reads TLCSDRGFWA…NVDLGGKFQF (294 aa).

The protein belongs to the PMP outer membrane protein family.

It localises to the secreted. The protein resides in the cell wall. It is found in the cell outer membrane. This Chlamydia pneumoniae (Chlamydophila pneumoniae) protein is Probable outer membrane protein pmp10 (pmp10).